We begin with the raw amino-acid sequence, 212 residues long: Pyridoxine/pyridoxamine 5'-phosphate oxidase 1 (212 aa).

Substrate-binding positions include 8–11 and lysine 66; that span reads RTDY. FMN is bound by residues 61–66, 76–77, lysine 83, and glutamine 105; these read RIVLLK and FT. 3 residues coordinate substrate: tyrosine 123, arginine 127, and serine 131. FMN is bound by residues 140-141 and tryptophan 184; that span reads QS. Residue 190-192 participates in substrate binding; sequence RLH. Arginine 194 contacts FMN.

It belongs to the pyridoxamine 5'-phosphate oxidase family. Homodimer. It depends on FMN as a cofactor.

It catalyses the reaction pyridoxamine 5'-phosphate + O2 + H2O = pyridoxal 5'-phosphate + H2O2 + NH4(+). The catalysed reaction is pyridoxine 5'-phosphate + O2 = pyridoxal 5'-phosphate + H2O2. Its pathway is cofactor metabolism; pyridoxal 5'-phosphate salvage; pyridoxal 5'-phosphate from pyridoxamine 5'-phosphate: step 1/1. It participates in cofactor metabolism; pyridoxal 5'-phosphate salvage; pyridoxal 5'-phosphate from pyridoxine 5'-phosphate: step 1/1. Functionally, catalyzes the oxidation of either pyridoxine 5'-phosphate (PNP) or pyridoxamine 5'-phosphate (PMP) into pyridoxal 5'-phosphate (PLP). The chain is Pyridoxine/pyridoxamine 5'-phosphate oxidase 1 from Ralstonia nicotianae (strain ATCC BAA-1114 / GMI1000) (Ralstonia solanacearum).